A 330-amino-acid chain; its full sequence is Molybdate/tungstate import ATP-binding protein WtpC (330 aa).

Residues 3–232 enclose the ABC transporter domain; that stretch reads LMVEGISKDY…PASEEVAKFL (230 aa). 34-41 contributes to the ATP binding site; that stretch reads GPSGAGKT.

Belongs to the ABC transporter superfamily. Sulfate/tungstate importer (TC 3.A.1.6) family. The complex is composed of two ATP-binding proteins (WtpC), two transmembrane proteins (WtpB) and a solute-binding protein (WtpA).

It is found in the cell membrane. It carries out the reaction tungstate(in) + ATP + H2O = tungstate(out) + ADP + phosphate + H(+). Functionally, part of the ABC transporter complex WtpABC involved in molybdate/tungstate import. Responsible for energy coupling to the transport system. The protein is Molybdate/tungstate import ATP-binding protein WtpC (wtpC) of Thermococcus kodakarensis (strain ATCC BAA-918 / JCM 12380 / KOD1) (Pyrococcus kodakaraensis (strain KOD1)).